A 619-amino-acid chain; its full sequence is Long-chain fatty acid transport protein 6 (619 aa).

The next 2 membrane-spanning stretches (helical) occupy residues 22–42 (LLFP…LIII) and 119–139 (VHVW…NTNI). 221 to 232 (YIFTSGTTGLPK) contacts AMP.

It belongs to the ATP-dependent AMP-binding enzyme family. In terms of tissue distribution, strongly expressed in heart and localizes to cardiac myocytes. Expressed at moderate levels in placenta, testis, and adrenal glands. Expressed at very low levels in kidney, bladder and uterus.

The protein localises to the cell membrane. It localises to the sarcolemma. It carries out the reaction a fatty acid(in) = a fatty acid(out). The catalysed reaction is hexadecanoate(out) = hexadecanoate(in). The enzyme catalyses (9Z)-octadecenoate(out) = (9Z)-octadecenoate(in). It catalyses the reaction (9Z,12Z)-octadecadienoate(out) = (9Z,12Z)-octadecadienoate(in). It carries out the reaction a very long-chain fatty acid + ATP + CoA = a very long-chain fatty acyl-CoA + AMP + diphosphate. The catalysed reaction is tetracosanoate + ATP + CoA = tetracosanoyl-CoA + AMP + diphosphate. The enzyme catalyses a long-chain fatty acid + ATP + CoA = a long-chain fatty acyl-CoA + AMP + diphosphate. It catalyses the reaction (5Z,8Z,11Z,14Z)-eicosatetraenoate + ATP + CoA = (5Z,8Z,11Z,14Z)-eicosatetraenoyl-CoA + AMP + diphosphate. It carries out the reaction (9Z)-octadecenoate + ATP + CoA = (9Z)-octadecenoyl-CoA + AMP + diphosphate. In terms of biological role, mediates the import of long-chain fatty acids (LCFA) into the cell by facilitating their transport at the plasma membrane. Also functions as an acyl-CoA ligase catalyzing the ATP-dependent formation of fatty acyl-CoA using LCFA and very-long-chain fatty acids (VLCFA) as substrates. Plays a pivotal role in regulating available LCFA substrates from exogenous sources in tissues undergoing high levels of beta-oxidation such as the heart. The chain is Long-chain fatty acid transport protein 6 (SLC27A6) from Homo sapiens (Human).